A 65-amino-acid chain; its full sequence is Putative antitoxin MJECL31 (65 aa).

It belongs to the UPF0165 family.

In terms of biological role, possibly the antitoxin component of a type II toxin-antitoxin (TA) system. The polypeptide is Putative antitoxin MJECL31 (Methanocaldococcus jannaschii (strain ATCC 43067 / DSM 2661 / JAL-1 / JCM 10045 / NBRC 100440) (Methanococcus jannaschii)).